Consider the following 143-residue polypeptide: Large ribosomal subunit protein uL11 (143 aa).

This sequence belongs to the universal ribosomal protein uL11 family. As to quaternary structure, part of the ribosomal stalk of the 50S ribosomal subunit. Interacts with L10 and the large rRNA to form the base of the stalk. L10 forms an elongated spine to which L12 dimers bind in a sequential fashion forming a multimeric L10(L12)X complex. One or more lysine residues are methylated.

In terms of biological role, forms part of the ribosomal stalk which helps the ribosome interact with GTP-bound translation factors. In Clavibacter michiganensis subsp. michiganensis (strain NCPPB 382), this protein is Large ribosomal subunit protein uL11.